Consider the following 121-residue polypeptide: Large ribosomal subunit protein bL12 (121 aa).

The protein belongs to the bacterial ribosomal protein bL12 family. In terms of assembly, homodimer. Part of the ribosomal stalk of the 50S ribosomal subunit. Forms a multimeric L10(L12)X complex, where L10 forms an elongated spine to which 2 to 4 L12 dimers bind in a sequential fashion. Binds GTP-bound translation factors.

In terms of biological role, forms part of the ribosomal stalk which helps the ribosome interact with GTP-bound translation factors. Is thus essential for accurate translation. This Bacillus pumilus (strain SAFR-032) protein is Large ribosomal subunit protein bL12.